Reading from the N-terminus, the 201-residue chain is Casparian strip membrane protein 4 (201 aa).

Residues 1–23 are disordered; sequence MEGKAAVTTSTEHGDGEASRTAA. Residues 1 to 41 lie on the Cytoplasmic side of the membrane; it reads MEGKAAVTTSTEHGDGEASRTAARTVVSGSSRGGAASRALS. The chain crosses the membrane as a helical span at residues 42 to 62; the sequence is VADLILRVVAVVAIVDSAIAM. Over 63-87 the chain is Extracellular; that stretch reads GTTNQTLPFFTQFLRFKAQYSDLPT. N66 carries N-linked (GlcNAc...) asparagine glycosylation. Residues 88–108 traverse the membrane as a helical segment; it reads LTLFVVANSAVTAYLVLSIPL. At 109 to 122 the chain is on the cytoplasmic side; the sequence is SVVHIIRSRASYSR. The helical transmembrane segment at 123 to 143 threads the bilayer; sequence LVLIFLDSVMLALVAAVASAS. The Extracellular segment spans residues 144–172; that stretch reads AAIVYLAHKGNVRANWFAVCQQFDSFCER. A helical transmembrane segment spans residues 173–193; sequence ISGPLIGSFAAMAVLLLLVLL. Residues 194–201 lie on the Cytoplasmic side of the membrane; that stretch reads SAAALARR.

The protein belongs to the Casparian strip membrane proteins (CASP) family. In terms of assembly, homodimer and heterodimers.

Its subcellular location is the cell membrane. Regulates membrane-cell wall junctions and localized cell wall deposition. Required for establishment of the Casparian strip membrane domain (CSD) and the subsequent formation of Casparian strips, a cell wall modification of the root endodermis that determines an apoplastic barrier between the intraorganismal apoplasm and the extraorganismal apoplasm and prevents lateral diffusion. This Oryza sativa subsp. japonica (Rice) protein is Casparian strip membrane protein 4.